A 283-amino-acid polypeptide reads, in one-letter code: Acetyl-coenzyme A carboxylase carboxyl transferase subunit beta (283 aa).

Residues 27–283 (VWVKCERCGE…LLDLHLRGEK (257 aa)) form the CoA carboxyltransferase N-terminal domain. Residues C31, C34, C50, and C53 each contribute to the Zn(2+) site. The C4-type zinc finger occupies 31 to 53 (CERCGEILFKKELDKNYKVCLKC).

The protein belongs to the AccD/PCCB family. As to quaternary structure, acetyl-CoA carboxylase is a heterohexamer composed of biotin carboxyl carrier protein (AccB), biotin carboxylase (AccC) and two subunits each of ACCase subunit alpha (AccA) and ACCase subunit beta (AccD). It depends on Zn(2+) as a cofactor.

The protein localises to the cytoplasm. It catalyses the reaction N(6)-carboxybiotinyl-L-lysyl-[protein] + acetyl-CoA = N(6)-biotinyl-L-lysyl-[protein] + malonyl-CoA. The protein operates within lipid metabolism; malonyl-CoA biosynthesis; malonyl-CoA from acetyl-CoA: step 1/1. Component of the acetyl coenzyme A carboxylase (ACC) complex. Biotin carboxylase (BC) catalyzes the carboxylation of biotin on its carrier protein (BCCP) and then the CO(2) group is transferred by the transcarboxylase to acetyl-CoA to form malonyl-CoA. The polypeptide is Acetyl-coenzyme A carboxylase carboxyl transferase subunit beta (Pelotomaculum thermopropionicum (strain DSM 13744 / JCM 10971 / SI)).